Here is a 412-residue protein sequence, read N- to C-terminus: Acyl-[acyl-carrier-protein] hydrolase FATB3, chloroplastic (412 aa).

The segment covering 1 to 25 (MVAAAASSAFFSFPTPGTSPKPGKF) has biased composition (low complexity). Residues 1–50 (MVAAAASSAFFSFPTPGTSPKPGKFGNWPSSLSIPFNPKSNHNGGIQVKA) constitute a chloroplast transit peptide. Residues 1-63 (MVAAAASSAF…AHPKANGSAV (63 aa)) form a disordered region. Polar residues predominate over residues 28–44 (WPSSLSIPFNPKSNHNG). Catalysis depends on residues asparagine 310, histidine 312, and cysteine 347. The segment at 393-412 (NAGATGAVSTGKTSNGNSVS) is disordered. Polar residues predominate over residues 399 to 412 (AVSTGKTSNGNSVS).

This sequence belongs to the acyl-ACP thioesterase family.

The protein localises to the plastid. It is found in the chloroplast. It carries out the reaction tetradecanoyl-[ACP] + H2O = tetradecanoate + holo-[ACP] + H(+). Functionally, plays an essential role in chain termination during de novo fatty acid synthesis. Possesses thioesterase activity for medium chain acyl-ACPs. Main substrate is 14:0. This Cuphea viscosissima (Blue waxweed) protein is Acyl-[acyl-carrier-protein] hydrolase FATB3, chloroplastic.